A 329-amino-acid chain; its full sequence is Telomeric repeat-binding factor 2-interacting protein 1 (329 aa).

Residues 63–86 (AVSTDYVVACVESQRRLPLDLYRH) enclose the BRCT domain. A Myb-like domain is found at 94 to 153 (ASPRGRLPFTEAEDAALLRAVRERSGAPRVSGTALWKELECTGLTRHSWQAMRDRYLRHL). Residues 179–206 (EFESSESGSDTSDTPDELPLQNGEGTFP) are disordered. The Nuclear localization signal signature appears at 313 to 329 (AKFGAENVARRVAFRKS).

It belongs to the RAP1 family. Homodimer. Component of the shelterin complex (telosome). Interacts with terf2; the interaction is direct.

The protein resides in the nucleus. It is found in the chromosome. The protein localises to the telomere. Acts both as a regulator of telomere function and as a transcription regulator. Involved in the regulation of telomere length and protection as a component of the shelterin complex (telosome). Does not bind DNA directly: recruited to telomeric double-stranded 5'-TTAGGG-3' repeats via its interaction with terf2. Independently of its function in telomeres, also acts as a transcription regulator: recruited to extratelomeric 5'-TTAGGG-3' sites via its association with terf2 or other factors, and regulates gene expression. The polypeptide is Telomeric repeat-binding factor 2-interacting protein 1 (TERF2IP) (Gallus gallus (Chicken)).